A 688-amino-acid polypeptide reads, in one-letter code: Potassium-transporting ATPase ATP-binding subunit (688 aa).

4 helical membrane passes run 37 to 57, 65 to 85, 219 to 239, and 262 to 282; these read FLVY…LVGI, ILGI…AEAI, IALQ…TVSL, and VALL…SIGI. Aspartate 313 acts as the 4-aspartylphosphate intermediate in catalysis. Residues aspartate 350, glutamate 354, 383-390, and lysine 401 contribute to the ATP site; that span reads FTAKTRMS. Residues aspartate 524 and aspartate 528 each contribute to the Mg(2+) site. The next 3 helical transmembrane spans lie at 594-614, 622-642, and 668-688; these read FAII…LNIM, AIFS…PLAL, and IIVP…IGIV.

Belongs to the cation transport ATPase (P-type) (TC 3.A.3) family. Type IA subfamily. As to quaternary structure, the system is composed of three essential subunits: KdpA, KdpB and KdpC.

Its subcellular location is the cell membrane. It carries out the reaction K(+)(out) + ATP + H2O = K(+)(in) + ADP + phosphate + H(+). Part of the high-affinity ATP-driven potassium transport (or Kdp) system, which catalyzes the hydrolysis of ATP coupled with the electrogenic transport of potassium into the cytoplasm. This subunit is responsible for energy coupling to the transport system and for the release of the potassium ions to the cytoplasm. The polypeptide is Potassium-transporting ATPase ATP-binding subunit (Clostridium botulinum (strain Alaska E43 / Type E3)).